Here is a 217-residue protein sequence, read N- to C-terminus: Ribonuclease HII (217 aa).

In terms of domain architecture, RNase H type-2 spans 27–216 (SQVAGVDEAG…VKESIQEGVC (190 aa)). A divalent metal cation contacts are provided by aspartate 33, glutamate 34, and aspartate 126.

Belongs to the RNase HII family. Requires Mn(2+) as cofactor. The cofactor is Mg(2+).

It localises to the cytoplasm. The enzyme catalyses Endonucleolytic cleavage to 5'-phosphomonoester.. Endonuclease that specifically degrades the RNA of RNA-DNA hybrids. In Chlamydia trachomatis serovar D (strain ATCC VR-885 / DSM 19411 / UW-3/Cx), this protein is Ribonuclease HII (rnhB).